Here is a 179-residue protein sequence, read N- to C-terminus: MSRVAKAPVIHSANVEVTFVDGVITVKGPKGILTQKINKLVNIQHSKESNKLEFSPASNDPMGWAQAGTARALVRNMVQGVTEGYTVTLELVGVGYRAQSKDKSISLSLGYSHSIEYDLPKGVTVETPNNTTILLKGVDKQVLGQIASEIRAFRPPEPYKGKGVKYAGEQIVRKEAKKK.

This sequence belongs to the universal ribosomal protein uL6 family. As to quaternary structure, part of the 50S ribosomal subunit.

This protein binds to the 23S rRNA, and is important in its secondary structure. It is located near the subunit interface in the base of the L7/L12 stalk, and near the tRNA binding site of the peptidyltransferase center. The sequence is that of Large ribosomal subunit protein uL6 from Legionella pneumophila (strain Paris).